Reading from the N-terminus, the 61-residue chain is uncharacterized protein (61 aa).

Residues 1-40 (MRRGGEPQCDGREFRIASSPAREREDDNETAPPQTSAAQE) form a disordered region. Residues 9-25 (CDGREFRIASSPARERE) are compositionally biased toward basic and acidic residues.

This is an uncharacterized protein from Caenorhabditis elegans.